The following is a 105-amino-acid chain: Met repressor (105 aa).

This sequence belongs to the MetJ family. Homodimer.

It is found in the cytoplasm. In terms of biological role, this regulatory protein, when combined with SAM (S-adenosylmethionine) represses the expression of the methionine regulon and of enzymes involved in SAM synthesis. The sequence is that of Met repressor from Haemophilus influenzae (strain PittEE).